Reading from the N-terminus, the 20-residue chain is Non-specific lipid-transfer protein (20 aa).

This sequence belongs to the plant LTP family.

Functionally, plant non-specific lipid-transfer proteins transfer phospholipids as well as galactolipids across membranes. May play a role in wax or cutin deposition in the cell walls of expanding epidermal cells and certain secretory tissues. The chain is Non-specific lipid-transfer protein from Citrus limon (Lemon).